Here is a 355-residue protein sequence, read N- to C-terminus: Uroporphyrinogen decarboxylase (355 aa).

Substrate contacts are provided by residues R38 to R42, D87, Y162, S217, and H331.

Belongs to the uroporphyrinogen decarboxylase family. In terms of assembly, homodimer.

It localises to the cytoplasm. It catalyses the reaction uroporphyrinogen III + 4 H(+) = coproporphyrinogen III + 4 CO2. The protein operates within porphyrin-containing compound metabolism; protoporphyrin-IX biosynthesis; coproporphyrinogen-III from 5-aminolevulinate: step 4/4. Functionally, catalyzes the decarboxylation of four acetate groups of uroporphyrinogen-III to yield coproporphyrinogen-III. The sequence is that of Uroporphyrinogen decarboxylase from Streptomyces coelicolor (strain ATCC BAA-471 / A3(2) / M145).